The following is a 137-amino-acid chain: Small ribosomal subunit protein uS9 (137 aa).

Residues Glu-100 to Arg-137 are disordered. Residues Lys-118–Arg-137 show a composition bias toward basic residues.

The protein belongs to the universal ribosomal protein uS9 family.

The chain is Small ribosomal subunit protein uS9 from Microcystis aeruginosa (strain NIES-843 / IAM M-2473).